Consider the following 128-residue polypeptide: Regulator of ribonuclease activity B (128 aa).

It belongs to the RraB family. In terms of assembly, interacts with the C-terminal region of Rne.

The protein resides in the cytoplasm. Functionally, globally modulates RNA abundance by binding to RNase E (Rne) and regulating its endonucleolytic activity. Can modulate Rne action in a substrate-dependent manner by altering the composition of the degradosome. The chain is Regulator of ribonuclease activity B from Idiomarina loihiensis (strain ATCC BAA-735 / DSM 15497 / L2-TR).